We begin with the raw amino-acid sequence, 343 residues long: uncharacterized protein (343 aa).

This sequence belongs to the histone deacetylase family.

Functionally, putative deacetylase. This is an uncharacterized protein from Methanocaldococcus jannaschii (strain ATCC 43067 / DSM 2661 / JAL-1 / JCM 10045 / NBRC 100440) (Methanococcus jannaschii).